The following is a 347-amino-acid chain: Dehydratase asqC (347 aa).

The signal sequence occupies residues 1-18 (MRPAILAAFSTLPAAAKA). N-linked (GlcNAc...) asparagine glycosylation is found at asparagine 51, asparagine 103, asparagine 131, asparagine 143, asparagine 215, asparagine 264, and asparagine 281.

The catalysed reaction is [(1'E)-5'-(3',3'-dimethyloxiran-2'-yl)-3'-hydroxy-3'-methylpent-1'-en-1'-yl]-quinolinone B = (1'E,3'E)-5-(3,3-dimethyloxiran-2-yl)-3-methylhexa-1,3-dienyl-quinolinone B + H2O. Its pathway is secondary metabolite biosynthesis. It participates in alkaloid biosynthesis. The protein operates within mycotoxin biosynthesis. Its function is as follows. Dehydratase; part of the gene cluster that mediates the biosynthesis of the aspoquinolone mycotoxins. Within the pathway, the dehydratase asqC catalyzes the dehydratation of the epoxide at C-3 to produce (1'E,3'E)-5-(3,3-dimethyloxiran-2-yl)-3-methylhexa-1,3-dienyl-quinolinone B. The first step of the pathway is catalyzed by the nonribosomal peptide synthetase asqK that condenses anthranilic acid and O-methyl-L-tyrosine to produce 4'-methoxycyclopeptin. 4'-methoxycyclopeptin is then converted to 4'-methoxydehydrocyclopeptin by the ketoglutarate-dependent dioxygenase asqJ. AsqJ also converts its first product 4'-methoxydehydrocyclopeptin to 4'-methoxycyclopenin. The following conversion of 4'-methoxycyclopenin into 4'-methoxyviridicatin is catalyzed by the cyclopenase asqI. 4'-methoxyviridicatin is the precursor of quinolone natural products, and is further converted to quinolinone B. The prenyltransferase asqH1 then catalyzes the canonical Friedel-Crafts alkylation of quinolinone B with dimethylallyl cation to yield dimethylallyl quinolone, which is subjected to FAD-dependent dehydrogenation by the FAD-linked oxidoreductase asqF to yield conjugated aryl diene. The delta(3') double bond then serves as the site of the second alkylation with DMAPP catalyzed by the prenyltransferase asqH2 to yield a carbenium ion intermediate, which can be attacked by H(2)O to yield a styrenyl quinolone containing a C3'-hydroxyprenyl chain. The FAD-dependent monooxygenase asqG performs epoxidation of the terminal C7'-C8' olefin. Finally, after dehydratation of the epoxide at C3 by asqC, the quinolone epoxide rearrangement protein asqO catalyzes an enzymatic 3-exo-tet cyclization to yield the cyclopropyl-THF ring system in aspoquinolone. In Emericella nidulans (strain FGSC A4 / ATCC 38163 / CBS 112.46 / NRRL 194 / M139) (Aspergillus nidulans), this protein is Dehydratase asqC.